Reading from the N-terminus, the 515-residue chain is Leucine-rich repeat transmembrane neuronal protein 2 (515 aa).

The first 33 residues, 1–33, serve as a signal peptide directing secretion; that stretch reads MGLHFKWPLGAPMLAAIYAMSVVLKMLPALGMA. Over 34 to 421 the chain is Extracellular; that stretch reads CPPKCRCEKL…EPDNAIFTQR (388 aa). A glycan (N-linked (GlcNAc...) asparagine) is linked at Asn57. 10 LRR repeats span residues 61-83, 84-107, 109-131, 132-155, 156-179, 181-203, 205-227, 229-251, 252-275, and 276-299; these read KGSL…QFAS, FSQL…AFQG, YKLK…TFTQ, LINL…LFYG, LRKL…LFWD, RSLE…GFAG, IKLR…HFLR, SSLH…MEWT, WSTL…VFET, and MPNL…ILSS. A glycan (N-linked (GlcNAc...) asparagine) is linked at Asn126. N-linked (GlcNAc...) asparagine glycosylation is present at Asn243. N-linked (GlcNAc...) asparagine glycosylation is present at Asn362. The chain crosses the membrane as a helical span at residues 422–442; that stretch reads VITGTMALLFSFFFIIFIVFI. Residues 443–515 lie on the Cytoplasmic side of the membrane; it reads SRKCCPPTLR…QQLPYKECEV (73 aa). The short motif at 512–515 is the Involved in DLG4-binding element; the sequence is ECEV.

It belongs to the LRRTM family. As to quaternary structure, interacts with DLG4. Interacts with neurexin NRXN1; interaction is mediated by heparan sulfate glycan modification on neurexin. In terms of tissue distribution, expressed in neuronal tissues. Widely distributed in neuropil regions in discrete puncta throughout the brain (at protein level). Detected in cortex, thalamus, striatum, olfactory bulb, cerebellum and all hippocampal subfields (at protein level). More abundant in deep than in superficial layers of neocortex (at protein level).

The protein resides in the cell membrane. The protein localises to the postsynaptic cell membrane. In terms of biological role, involved in the development and maintenance of excitatory synapses in the nervous system. Regulates surface expression of AMPA receptors and instructs the development of functional glutamate release sites. Acts as a ligand for the presynaptic receptors NRXN1-A and NRXN1-B. The sequence is that of Leucine-rich repeat transmembrane neuronal protein 2 (Lrrtm2) from Rattus norvegicus (Rat).